The following is a 476-amino-acid chain: Lactate utilization protein B 1 (476 aa).

4Fe-4S ferredoxin-type domains follow at residues 301 to 331 (GTEF…GHAY) and 350 to 379 (YDEY…LHDL). [4Fe-4S] cluster is bound by residues C310, C313, C316, C320, C363, C366, and C370.

It belongs to the LutB/YkgF family.

In terms of biological role, is involved in L-lactate degradation and allows cells to grow with lactate as the sole carbon source. Has probably a role as an electron transporter during oxidation of L-lactate. This is Lactate utilization protein B 1 from Bacillus mycoides (strain KBAB4) (Bacillus weihenstephanensis).